The chain runs to 145 residues: Large ribosomal subunit protein uL11 (145 aa).

It belongs to the universal ribosomal protein uL11 family. As to quaternary structure, part of the ribosomal stalk of the 50S ribosomal subunit. Interacts with L10 and the large rRNA to form the base of the stalk. L10 forms an elongated spine to which L12 dimers bind in a sequential fashion forming a multimeric L10(L12)X complex. In terms of processing, one or more lysine residues are methylated.

In terms of biological role, forms part of the ribosomal stalk which helps the ribosome interact with GTP-bound translation factors. This is Large ribosomal subunit protein uL11 from Rubrobacter xylanophilus (strain DSM 9941 / JCM 11954 / NBRC 16129 / PRD-1).